A 431-amino-acid chain; its full sequence is Enolase (431 aa).

Gln-167 lines the (2R)-2-phosphoglycerate pocket. Glu-209 functions as the Proton donor in the catalytic mechanism. Residues Asp-246, Glu-290, and Asp-317 each coordinate Mg(2+). The (2R)-2-phosphoglycerate site is built by Lys-342, Arg-371, Ser-372, and Lys-393. Catalysis depends on Lys-342, which acts as the Proton acceptor.

Belongs to the enolase family. In terms of assembly, component of the RNA degradosome, a multiprotein complex involved in RNA processing and mRNA degradation. It depends on Mg(2+) as a cofactor.

The protein resides in the cytoplasm. It localises to the secreted. Its subcellular location is the cell surface. The enzyme catalyses (2R)-2-phosphoglycerate = phosphoenolpyruvate + H2O. It functions in the pathway carbohydrate degradation; glycolysis; pyruvate from D-glyceraldehyde 3-phosphate: step 4/5. Its function is as follows. Catalyzes the reversible conversion of 2-phosphoglycerate (2-PG) into phosphoenolpyruvate (PEP). It is essential for the degradation of carbohydrates via glycolysis. This is Enolase from Serratia proteamaculans (strain 568).